Here is a 207-residue protein sequence, read N- to C-terminus: Guanylate kinase (207 aa).

One can recognise a Guanylate kinase-like domain in the interval 3-181 (GLLFVVSAAS…ALHDLESVIT (179 aa)). 10 to 17 (AASGTGKT) serves as a coordination point for ATP.

It belongs to the guanylate kinase family.

The protein resides in the cytoplasm. It carries out the reaction GMP + ATP = GDP + ADP. Essential for recycling GMP and indirectly, cGMP. This is Guanylate kinase from Acinetobacter baylyi (strain ATCC 33305 / BD413 / ADP1).